The following is a 305-amino-acid chain: Spermatogenesis-associated protein 4 (305 aa).

Residues 49–155 (SRLSRSVLRW…EEVYTLLTHR (107 aa)) enclose the Calponin-homology (CH) domain.

It is found in the nucleus. May play a role in apoptosis regulation. This is Spermatogenesis-associated protein 4 (SPATA4) from Pan troglodytes (Chimpanzee).